The chain runs to 293 residues: Probable rRNA-processing protein EBP2 homolog (293 aa).

Acidic residues predominate over residues Met-1–Glu-37. Disordered regions lie at residues Met-1–Pro-45 and Ile-150–Arg-293. A coiled-coil region spans residues His-135–Lys-190. 3 stretches are compositionally biased toward basic and acidic residues: residues Ile-150–Lys-167, Lys-173–Lys-189, and Lys-247–Phe-256. Residues Ser-265–Asp-275 are compositionally biased toward polar residues.

The protein belongs to the EBP2 family. As to quaternary structure, interacts with NSN1.

It is found in the nucleus. The protein resides in the nucleolus. Required for the processing of the 27S pre-rRNA. Plays an important role in plant growth and senescence by modulating ribosome biogenesis in nucleolus. Associates with ribosomes. This chain is Probable rRNA-processing protein EBP2 homolog, found in Arabidopsis thaliana (Mouse-ear cress).